The following is a 450-amino-acid chain: tRNA modification GTPase MnmE (450 aa).

(6S)-5-formyl-5,6,7,8-tetrahydrofolate is bound by residues Arg-25, Glu-83, and Lys-122. One can recognise a TrmE-type G domain in the interval 218 to 377 (GFKVAIIGKP…QMEALLDSIG (160 aa)). Asn-228 contacts K(+). Residues 228-233 (NVGKSS), 247-253 (SDIAGTT), and 272-275 (DTAG) each bind GTP. Ser-232 serves as a coordination point for Mg(2+). 3 residues coordinate K(+): Ser-247, Ile-249, and Thr-252. Thr-253 contributes to the Mg(2+) binding site. Lys-450 provides a ligand contact to (6S)-5-formyl-5,6,7,8-tetrahydrofolate.

The protein belongs to the TRAFAC class TrmE-Era-EngA-EngB-Septin-like GTPase superfamily. TrmE GTPase family. Homodimer. Heterotetramer of two MnmE and two MnmG subunits. Requires K(+) as cofactor.

It is found in the cytoplasm. Exhibits a very high intrinsic GTPase hydrolysis rate. Involved in the addition of a carboxymethylaminomethyl (cmnm) group at the wobble position (U34) of certain tRNAs, forming tRNA-cmnm(5)s(2)U34. The polypeptide is tRNA modification GTPase MnmE (Sulfurovum sp. (strain NBC37-1)).